The chain runs to 883 residues: MPWWSKSKDEKKKTNKESIIDAFNRKLGFASEDRSSGRSRKSRRRRDEIVSERGAISRLPSRSPSPSTRVSRCQSFAERSPAVPLPRPIVRPHVTSTDSGMNGSQRPGLDANLKPSWLPLPKPHGATSIPDNTGAEPDFATASVSSGSSVGDIPSDSLLSPLASDCENGNRTPVNISSRDQSMHSNKNSAEMFKPVPNKNRILSASPRRRPLGTHVKNLQIPQRDLVLCSAPDSLLSSPSRSPMRSFIPDQVSNHGLLISKPYSDVSLLGSGQCSSPGSGYNSGNNSIGGDMATQLFWPQSRCSPECSPVPSPRMTSPGPSSRIQSGAVTPLHPRAGGSTTGSPTRRLDDNRQQSHRLPLPPLLISNTCPFSPTYSAATSPSVPRSPARAEATVSPGSRWKKGRLLGMGSFGHVYLGFNSESGEMCAMKEVTLCSDDPKSRESAQQLGQEISVLSRLRHQNIVQYYGSETVDDKLYIYLEYVSGGSIYKLLQEYGQFGENAIRNYTQQILSGLAYLHAKNTVHRDIKGANILVDPHGRVKVADFGMAKHITAQSGPLSFKGSPYWMAPEVIKNSNGSNLAVDIWSLGCTVLEMATTKPPWSQYEGVPAMFKIGNSKELPDIPDHLSEEGKDFVRKCLQRNPANRPTAAQLLDHAFVRNVMPMERPIVSGEPAEAMNVASSTMRSLDIGHARSLPCLDSEDATNYQQKGLKHGSGFSISQSPRNMSCPISPVGSPIFHSHSPHISGRRSPSPISSPHALSGSSTPLTGCGGAIPFHHQRQTTVNFLHEGIGSSRSPGSGGNFYTNSFFQEPSRQQDRSRSSPRTPPHVFWDNNGSIQPGYNWNKDNQPVLSDHVSQQLLSEHLKLKSLDLRPGFSTPGSTNRGP.

Disordered stretches follow at residues 28-193 (GFAS…AEMF), 303-364 (CSPE…PPLL), and 376-396 (SAAT…TVSP). Positions 57-72 (SRLPSRSPSPSTRVSR) are enriched in low complexity. Residues 94–105 (VTSTDSGMNGSQ) are compositionally biased toward polar residues. Low complexity predominate over residues 143-165 (SVSSGSSVGDIPSDSLLSPLASD). Composition is skewed to polar residues over residues 167 to 189 (ENGN…NKNS) and 314 to 328 (RMTS…QSGA). The region spanning 400 to 656 (WKKGRLLGMG…AAQLLDHAFV (257 aa)) is the Protein kinase domain. ATP is bound by residues 406 to 414 (LGMGSFGHV) and Lys-429. The Proton acceptor role is filled by Asp-525. Disordered stretches follow at residues 712–773 (GSGF…GAIP) and 787–838 (EGIG…IQPG). The span at 733–756 (SPIFHSHSPHISGRRSPSPISSPH) shows a compositional bias: low complexity.

This sequence belongs to the protein kinase superfamily. STE Ser/Thr protein kinase family. MAP kinase kinase kinase subfamily. In terms of assembly, interacts with ASK7. Interacts with BSK12/SSP. Binds to BASL and MPK6. As to expression, expressed in roots, leaves, guard cells, stems, flowers and siliques.

The protein localises to the cytoplasm. It is found in the cell cortex. Its subcellular location is the cell membrane. The enzyme catalyses L-seryl-[protein] + ATP = O-phospho-L-seryl-[protein] + ADP + H(+). It carries out the reaction L-threonyl-[protein] + ATP = O-phospho-L-threonyl-[protein] + ADP + H(+). Contains an N-terminal autoinhibitory domain. Functionally, functions in a MAP kinase cascade that acts as a molecular switch to regulate the first cell fate decisions in the zygote and the early embryo. Promotes elongation of the zygote and development of its basal daughter cell into the extra-embryonic suspensor. In stomatal development, acts downstream of the LRR receptor TMM, but upstream of the MKK4/MKK5-MPK3/MPK6 module to regulate stomatal cell fate before the guard mother cell (GMC) is specified. Plays a central role in both guard cell identity and pattern formation. This MAPK cascade also functions downstream of the ER receptor in regulating coordinated local cell proliferation, which shapes the morphology of plant organs. Upon brassinosteroid signaling, is inhibited by phosphorylation of its auto-inhibitory N-terminal domain by the GSK3-like kinase ASK7. In Arabidopsis thaliana (Mouse-ear cress), this protein is Mitogen-activated protein kinase kinase kinase YODA.